The sequence spans 83 residues: MLSLGFIALGAAVSIAVIVWALLYREYKKIKLQEKIKHIRQRIREREEDSGNESDGDAEWLDGDEEWLVTLLSSSKLDQGNWV.

Over Met-1–Leu-4 the chain is Extracellular. A helical transmembrane segment spans residues Gly-5–Arg-25. Over Glu-26–Val-83 the chain is Cytoplasmic. 2 positions are modified to phosphoserine; by host CK2: Ser-50 and Ser-54.

This sequence belongs to the HIV-1 VPU protein family. As to quaternary structure, homopentamer. Interacts with host CD4 and BRTC; these interactions induce proteasomal degradation of CD4. Interacts with host BST2; this interaction leads to the degradation of host BST2. Interacts with host FBXW11. Interacts with host AP1M1; this interaction plays a role in the mistrafficking and subsequent degradation of host BST2. Interacts with host RANBP2; this interaction allows Vpu to down-regulate host BLM sumoylation. Phosphorylated by host CK2. This phosphorylation is necessary for interaction with human BTRC and degradation of CD4.

It is found in the host membrane. With respect to regulation, ion channel activity is inhibited by hexamethylene amiloride in vitro. In terms of biological role, enhances virion budding by targeting host CD4 and Tetherin/BST2 to proteasome degradation. Degradation of CD4 prevents any unwanted premature interactions between viral Env and its host receptor CD4 in the endoplasmic reticulum. Degradation of antiretroviral protein Tetherin/BST2 is important for virion budding, as BST2 tethers new viral particles to the host cell membrane. Mechanistically, Vpu bridges either CD4 or BST2 to BTRC, a substrate recognition subunit of the Skp1/Cullin/F-box protein E3 ubiquitin ligase, induces their ubiquitination and subsequent proteasomal degradation. The alteration of the E3 ligase specificity by Vpu seems to promote the degradation of host IKBKB, leading to NF-kappa-B down-regulation and subsequent apoptosis. Acts as a viroporin that forms an oligomeric ion channel in membranes. Modulates the host DNA repair mechanisms to promote degradation of nuclear viral cDNA in cells that are already productively infected in order to suppress immune sensing and proviral hyper-integration (superinfection). Manipulates PML-NBs and modulates SUMOylation of host BLM protein thereby enhancing its DNA-end processing activity toward viral unintegrated linear DNA. Also inhibits RAD52-mediated homologous repair of viral cDNA, preventing the generation of dead-end circular forms of single copies of the long terminal repeat and permitting sustained nucleolytic attack. This Human immunodeficiency virus type 1 group N (isolate YBF30) (HIV-1) protein is Protein Vpu.